Reading from the N-terminus, the 193-residue chain is Rho-related protein racB (193 aa).

GTP-binding residues include Ala13, Gly15, Lys16, Thr17, Cys18, Tyr32, Thr35, Gly60, Lys116, Asp118, and Ala159. Position 17 (Thr17) interacts with Mg(2+). Short sequence motifs (switch) lie at residues Asn26–Phe37 and Asp57–Thr75. Position 35 (Thr35) interacts with Mg(2+). Position 190 is a cysteine methyl ester (Cys190). A lipid anchor (S-geranylgeranyl cysteine) is attached at Cys190. Positions Leu191 to Phe193 are cleaved as a propeptide — removed in mature form.

The protein belongs to the small GTPase superfamily. Rho family. It depends on Mg(2+) as a cofactor.

It localises to the cell membrane. Its subcellular location is the cytoplasm. The protein localises to the cytoskeleton. It catalyses the reaction GTP + H2O = GDP + phosphate + H(+). With respect to regulation, regulated by guanine nucleotide exchange factors (GEFs) which promote the exchange of bound GDP for free GTP, GTPase activating proteins (GAPs) which increase the GTP hydrolysis activity, and GDP dissociation inhibitors which inhibit the dissociation of the nucleotide from the GTPase. Small GTPase which cycles between active GTP-bound and inactive GDP-bound states. The chain is Rho-related protein racB from Entamoeba histolytica (strain ATCC 30459 / HM-1:IMSS / ABRM).